A 258-amino-acid chain; its full sequence is 3-deoxy-manno-octulosonate cytidylyltransferase (258 aa).

It belongs to the KdsB family.

It localises to the cytoplasm. It catalyses the reaction 3-deoxy-alpha-D-manno-oct-2-ulosonate + CTP = CMP-3-deoxy-beta-D-manno-octulosonate + diphosphate. Its pathway is nucleotide-sugar biosynthesis; CMP-3-deoxy-D-manno-octulosonate biosynthesis; CMP-3-deoxy-D-manno-octulosonate from 3-deoxy-D-manno-octulosonate and CTP: step 1/1. It participates in bacterial outer membrane biogenesis; lipopolysaccharide biosynthesis. Functionally, activates KDO (a required 8-carbon sugar) for incorporation into bacterial lipopolysaccharide in Gram-negative bacteria. This Gemmatimonas aurantiaca (strain DSM 14586 / JCM 11422 / NBRC 100505 / T-27) protein is 3-deoxy-manno-octulosonate cytidylyltransferase.